The sequence spans 314 residues: Olfactory receptor 52K2 (314 aa).

At 1–27 the chain is on the extracellular side; sequence MSASNITLTHPTAFLLVGIPGLEHLHI. Asn-5 carries N-linked (GlcNAc...) asparagine glycosylation. Residues 28 to 48 form a helical membrane-spanning segment; that stretch reads WISIPFCLAYTLALLGNCTLL. Topologically, residues 49–56 are cytoplasmic; it reads LIIQADAA. A helical membrane pass occupies residues 57–77; it reads LHEPMYLFLAMLAAIDLVLSS. At 78 to 101 the chain is on the extracellular side; it reads SALPKMLAIFWFRDREINFFACLA. Cys-99 and Cys-191 are oxidised to a cystine. A helical transmembrane segment spans residues 102–122; sequence QMFFLHSFSIMESAVLLAMAF. At 123-141 the chain is on the cytoplasmic side; sequence DRYVAICKPLHYTKVLTGS. Residues 142 to 162 form a helical membrane-spanning segment; sequence LITKIGMAAVARAVTLMTPLP. The Extracellular segment spans residues 163-198; it reads FLLRCFHYCRGPVIAHCYCEHMAVVRLACGDTSFNN. The chain crosses the membrane as a helical span at residues 199–219; sequence IYGIAVAMFIVVLDLLLVILS. Residues 220-239 are Cytoplasmic-facing; that stretch reads YIFILQAVLLLASQEARYKA. A helical transmembrane segment spans residues 240 to 260; that stretch reads FGTCVSHIGAILAFYTTVVIS. At 261–275 the chain is on the extracellular side; it reads SVMHRVARHAAPHVH. A helical transmembrane segment spans residues 276–296; that stretch reads ILLANFYLLFPPMVNPIIYGV. The Cytoplasmic segment spans residues 297–314; it reads KTKQIRESILGVFPRKDM.

It belongs to the G-protein coupled receptor 1 family.

It localises to the cell membrane. In terms of biological role, odorant receptor. In Homo sapiens (Human), this protein is Olfactory receptor 52K2 (OR52K2).